A 7913-amino-acid chain; its full sequence is Nonribosomal peptide synthetase dtxS1 (7913 aa).

Positions 263–662 (FEQRSRAHPN…GRNDNQVKIR (400 aa)) are adenylation 1. The Carrier 1 domain maps to 789–865 (QPLSEVEKQV…NVAGQARRTT (77 aa)). O-(pantetheine 4'-phosphoryl)serine is present on Ser826. The tract at residues 903 to 1171 (QDAFPCTSLQ…ITTVPVRIRL (269 aa)) is condensation 1. The tract at residues 1332–1740 (LETQAHSRPD…GRKDAQVKIR (409 aa)) is adenylation 2. A Carrier 2 domain is found at 1865 to 1941 (QPRTKLERQL…NLAQATGTQG (77 aa)). Ser1902 carries the post-translational modification O-(pantetheine 4'-phosphoryl)serine. The tract at residues 1965-2249 (PAQLSPIQRL…FSTIFPVRVS (285 aa)) is condensation 2. Positions 2863–3255 (LAQPHEPAIC…ARKDAQIKIR (393 aa)) are adenylation 3. Residues 3380-3456 (QPLSEAERKM…NVTHQAVAQL (77 aa)) enclose the Carrier 3 domain. Ser3417 is modified (O-(pantetheine 4'-phosphoryl)serine). A condensation 3 region spans residues 3496–3761 (DAFPCTPLQE…FATLPLRVRL (266 aa)). The segment at 3924–4321 (DRVRIHPNAP…GRKDDQVKLR (398 aa)) is adenylation 4. The segment covering 4439-4450 (ELAQARTAQQGP) has biased composition (polar residues). The tract at residues 4439-4459 (ELAQARTAQQGPKRQPASEAE) is disordered. The Carrier 4 domain occupies 4453-4529 (QPASEAERQM…EAATQAQMLG (77 aa)). An O-(pantetheine 4'-phosphoryl)serine modification is found at Ser4490. The interval 4545 to 4837 (QSFAQARLWF…VNMQCLRVKI (293 aa)) is condensation 4. Residues 5006–5405 (FRQQVAACAD…RRMDAQVKIR (400 aa)) form an adenylation 5 region. Residues 5933–6009 (QPTSKTQRQL…DMAEGLPLAK (77 aa)) enclose the Carrier 5 domain. The residue at position 5970 (Ser5970) is an O-(pantetheine 4'-phosphoryl)serine. Residues 6023-6315 (VEQSFAQRRL…VNMQCIRIRV (293 aa)) form a condensation 5 region. The tract at residues 6481 to 6766 (FRQQALLNPD…IINAYGPTEN (286 aa)) is adenylation 6. The 77-residue stretch at 7394 to 7470 (QPTTDMEREM…DLACHLSPEE (77 aa)) folds into the Carrier 6 domain. Position 7431 is an O-(pantetheine 4'-phosphoryl)serine (Ser7431). Residues 7501–7771 (EDVLPLTSFQ…CLNIVPIRVN (271 aa)) are condensation 6.

The protein belongs to the NRP synthetase family.

The protein operates within secondary metabolite biosynthesis. Its function is as follows. Nonribosomal peptide synthetase; part of the gene cluster that mediates the biosynthesis of destruxins, insecticidal cyclic hexadepsipeptides which induce flaccid paralysis and visceral muscle contraction in insects through targeting the calcium channels and vacuolar-type ATPases. The aldo-keto reductase dtxS3 converts alpha-ketoisocaproic acid from deaminated leucine into alpha-hydroxyisocaproic acid (HIC), which is the first substrate for destruxin assembly by dtxS1. L-aspartate decarboxylase dtxS4 converts aspartic acid into beta-alanine, the last substrate for the destruxin assembly line performed by dtxS1. The nonribosomal peptide synthetase dtxS1 synthesizes destruxins B and B2, whereas the cytochrome P450 monooxygenase dtxS2 is required to convert destruxin B into other destruxin derivatives, including destructins C, D, A and E. Destruxin E-diol (ED) is further produced in a non-enzymatic manner from destruxin E. Destruxins play an important role in virulence and escape from insect host immune defenses. This chain is Nonribosomal peptide synthetase dtxS1, found in Metarhizium robertsii (strain ARSEF 23 / ATCC MYA-3075) (Metarhizium anisopliae (strain ARSEF 23)).